Reading from the N-terminus, the 185-residue chain is Ribosomal RNA small subunit methyltransferase G (185 aa).

Residues Gly59, Phe64, Ile110–Gln111, and Arg127 contribute to the S-adenosyl-L-methionine site.

The protein belongs to the methyltransferase superfamily. RNA methyltransferase RsmG family.

The protein localises to the cytoplasm. The catalysed reaction is guanosine(527) in 16S rRNA + S-adenosyl-L-methionine = N(7)-methylguanosine(527) in 16S rRNA + S-adenosyl-L-homocysteine. Specifically methylates the N7 position of guanine in position 527 of 16S rRNA. In Helicobacter hepaticus (strain ATCC 51449 / 3B1), this protein is Ribosomal RNA small subunit methyltransferase G.